The following is a 1166-amino-acid chain: ATP-dependent helicase/deoxyribonuclease subunit B (1166 aa).

One can recognise a UvrD-like helicase ATP-binding domain in the interval 1–390 (MGVEFLVGRS…HPLIEFIRSS (390 aa)). An ATP-binding site is contributed by 8–15 (GRSGSGKT). Residues 281 to 586 (TKRHQHAPEL…HFSLIPPALD (306 aa)) form the UvrD-like helicase C-terminal domain. Cys-801, Cys-1121, Cys-1124, and Cys-1130 together coordinate [4Fe-4S] cluster.

This sequence belongs to the helicase family. AddB/RexB type 1 subfamily. Heterodimer of AddA and AddB. It depends on Mg(2+) as a cofactor. [4Fe-4S] cluster is required as a cofactor.

Functionally, the heterodimer acts as both an ATP-dependent DNA helicase and an ATP-dependent, dual-direction single-stranded exonuclease. Recognizes the chi site generating a DNA molecule suitable for the initiation of homologous recombination. The AddB subunit has 5' -&gt; 3' nuclease activity but not helicase activity. This chain is ATP-dependent helicase/deoxyribonuclease subunit B, found in Bacillus velezensis (strain DSM 23117 / BGSC 10A6 / LMG 26770 / FZB42) (Bacillus amyloliquefaciens subsp. plantarum).